Here is a 1269-residue protein sequence, read N- to C-terminus: Histone-lysine N-methyltransferase SETDB1 (1269 aa).

Residues 9–63 (KELGISMDDLRELIDRELEKIEFVKQRKAQLLEMEQLVKQKEAEVDHVDKLFDNA) are a coiled coil. Disordered regions lie at residues 85-121 (YKES…GEAV) and 153-188 (QKKS…DMSK). Positions 103 to 112 (EIPDEDDDDV) are enriched in acidic residues. Low complexity predominate over residues 164–177 (SSHPSSPTSSVGGS). 2 Tudor domains span residues 250 to 312 (ENLT…RPWS) and 340 to 395 (VLLK…MFSM). Positions 396 to 414 (KTSNASTQEKQQAGQQRTR) are enriched in polar residues. The segment at 396 to 516 (KTSNASTQEK…FQSNQSVQPV (121 aa)) is disordered. Over residues 462–476 (DSQQAQSKKQVAKKS) the composition is skewed to low complexity. Residues 486-497 (SGQSSPIPTESV) show a composition bias toward polar residues. The MBD domain maps to 620-691 (HRGKNPLLVP…EMFCLDPYVL (72 aa)). Positions 753–826 (VGCDCTDGCR…MCNNRLVQHG (74 aa)) constitute a Pre-SET domain. Zn(2+) contacts are provided by cysteine 755, cysteine 757, cysteine 761, cysteine 767, cysteine 769, cysteine 807, cysteine 811, cysteine 813, and cysteine 818. The SET domain occupies 829 to 1244 (VRLQLFKTQN…AGTELTWDYN (416 aa)). Residues 839 to 841 (KGW), aspartate 877, and tyrosine 879 each bind S-adenosyl-L-methionine. The interval 894-1139 (EGYESDAKSS…VAASAGPVKR (246 aa)) is disordered. A compositionally biased stretch (acidic residues) spans 919-932 (SGSEDQEESNDSSD). 2 stretches are compositionally biased toward basic and acidic residues: residues 968–989 (ASKD…ETSK) and 1021–1033 (ETDK…EASK). Low complexity predominate over residues 1078–1094 (TEEVLTLSSSSDSEVGS). Positions 1106–1120 (ATANDSDDIQTISSG) are enriched in polar residues. S-adenosyl-L-methionine contacts are provided by residues arginine 1198 and 1201-1202 (NH). Zn(2+)-binding residues include cysteine 1204, cysteine 1257, cysteine 1259, and cysteine 1264. The 17-residue stretch at 1253 to 1269 (KKLLCCCGSTECRGRLL) folds into the Post-SET domain.

This sequence belongs to the class V-like SAM-binding methyltransferase superfamily. Histone-lysine methyltransferase family. Suvar3-9 subfamily.

It is found in the nucleus. The protein resides in the chromosome. The catalysed reaction is N(6),N(6)-dimethyl-L-lysyl(9)-[histone H3] + S-adenosyl-L-methionine = N(6),N(6),N(6)-trimethyl-L-lysyl(9)-[histone H3] + S-adenosyl-L-homocysteine + H(+). Histone methyltransferase that specifically trimethylates 'Lys-9' of histone H3. H3 'Lys-9' trimethylation represents a specific tag for epigenetic transcriptional repression by recruiting HP1 (CBX1, CBX3 and/or CBX5) proteins to methylated histones. Mainly functions in euchromatin regions, thereby playing a central role in the silencing of euchromatic genes. H3 'Lys-9' trimethylation is coordinated with DNA methylation. Plays a role in promoter hypermethylation and transcriptional silencing of tumor suppressor genes (TSGs) or other tumor-related genes. Also required to maintain a transcriptionally repressive state of genes in undifferentiated embryonic stem cells (ESCs). Associates at promoter regions of tumor suppressor genes (TSGs) leading to their gene silencing. This chain is Histone-lysine N-methyltransferase SETDB1 (setdb1), found in Xenopus laevis (African clawed frog).